The sequence spans 858 residues: Respiratory burst oxidase homolog protein D (858 aa).

A compositionally biased stretch (basic and acidic residues) spans 1–13 (MQNPEDHHSDREL). Residues 1 to 27 (MQNPEDHHSDRELSSPSNTTKSNDDKN) are disordered. Residues 1 to 318 (MQNPEDHHSD…KYFLLDNWRR (318 aa)) are Cytoplasmic-facing. 2 EF-hand-like regions span residues 134 to 144 (TATSDSLLPRA) and 171 to 182 (RNITSGCISKEQ). 2 consecutive EF-hand domains span residues 194–229 (SFDS…SASA) and 238–273 (QAAE…APIQ). Positions 207, 209, 211, 213, and 218 each coordinate Ca(2+). Residues 319–339 (VWVLLLWIGVMAGLFAYKYVQ) form a helical membrane-spanning segment. The Extracellular portion of the chain corresponds to 340–351 (YKNKAAFNVMGH). The helical transmembrane segment at 352–372 (CVCVAKGAAEVLKLNMALILL) threads the bilayer. The region spanning 357 to 514 (KGAAEVLKLN…LFVIVYSLLI (158 aa)) is the Ferric oxidoreductase domain. At 373–397 (PVCRNTITWLRNKTKLGGAVPFDDN) the chain is on the cytoplasmic side. Residues 398 to 418 (INFHKVVAGAIAVGVGIHVLA) form a helical membrane-spanning segment. Topologically, residues 419–454 (HMTCDFPRLLNASPEKYKPMEPYFGDQPRNYWHFVK) are extracellular. The chain crosses the membrane as a helical span at residues 455–475 (GVEGVSGIIMVVLMSIAFTLA). At 476–497 (SQRFRRNKIRLPRPLNKLTGFN) the chain is on the cytoplasmic side. Residues 498-518 (AFWYSHHLFVIVYSLLIVHGI) form a helical membrane-spanning segment. Residues 519-675 (ELYLTKEWYK…APAQDYKEYE (157 aa)) are Extracellular-facing. Residues 548-670 (LRAFRSSVKD…DGPYGAPAQD (123 aa)) enclose the FAD-binding FR-type domain. Residues 676–696 (VLLLVGLGIGATPMISIVKDI) traverse the membrane as a helical segment. Over 697 to 858 (VNNMKEEKYD…TKFDFHKENF (162 aa)) the chain is Cytoplasmic.

This sequence belongs to the RBOH (TC 5.B.1.3) family. In terms of assembly, monomer and homodimer. Phosphorylated by CPK. In terms of tissue distribution, expressed in leaves.

Its subcellular location is the membrane. In terms of biological role, calcium-dependent NADPH oxidase that generates superoxide. May be responsible for the oxidative burst in response to pathogen attack in the leaves. The sequence is that of Respiratory burst oxidase homolog protein D (RBOHD) from Solanum tuberosum (Potato).